Here is a 319-residue protein sequence, read N- to C-terminus: Vomeronasal type-1 receptor 96 (319 aa).

Residues methionine 1–serine 19 lie on the Extracellular side of the membrane. A helical transmembrane segment spans residues glutamate 20–phenylalanine 40. Over glutamate 41–aspartate 49 the chain is Cytoplasmic. Residues leucine 50 to alanine 70 form a helical membrane-spanning segment. At alanine 71–arginine 93 the chain is on the extracellular side. Cysteines 85 and 172 form a disulfide. A helical transmembrane segment spans residues leucine 94–leucine 114. Residues serine 115–cysteine 134 lie on the Cytoplasmic side of the membrane. A helical transmembrane segment spans residues alanine 135 to isoleucine 155. Topologically, residues alanine 156–glutamate 193 are extracellular. Asparagine 159 carries an N-linked (GlcNAc...) asparagine glycan. The helical transmembrane segment at alanine 194 to histidine 214 threads the bilayer. Residues lysine 215 to arginine 238 are Cytoplasmic-facing. The helical transmembrane segment at threonine 239–glutamine 259 threads the bilayer. The Extracellular portion of the chain corresponds to serine 260–methionine 269. The chain crosses the membrane as a helical span at residues phenylalanine 270 to isoleucine 290. At phenylalanine 291–proline 319 the chain is on the cytoplasmic side.

Belongs to the G-protein coupled receptor 1 family.

The protein resides in the cell membrane. In terms of biological role, putative pheromone receptor implicated in the regulation of social as well as reproductive behavior. The protein is Vomeronasal type-1 receptor 96 (Vom1r96) of Rattus norvegicus (Rat).